The sequence spans 709 residues: Peptidoglycan D,D-transpeptidase FtsI homolog (709 aa).

A helical membrane pass occupies residues 20–42; the sequence is LQGIYYAFLSISTMIKIALDPYS. The active-site Acyl-ester intermediate is Ser341.

The protein belongs to the transpeptidase family.

It localises to the plastid. The protein resides in the chloroplast membrane. The enzyme catalyses Preferential cleavage: (Ac)2-L-Lys-D-Ala-|-D-Ala. Also transpeptidation of peptidyl-alanyl moieties that are N-acyl substituents of D-alanine.. This chain is Peptidoglycan D,D-transpeptidase FtsI homolog (ftsI), found in Nephroselmis olivacea (Green alga).